A 353-amino-acid polypeptide reads, in one-letter code: UPF0658 Golgi apparatus membrane protein C23H3.04 (353 aa).

Transmembrane regions (helical) follow at residues 39 to 59 (IFFL…EGYC), 76 to 96 (SLPI…YLCV), 103 to 123 (NIIE…YSIV), 172 to 192 (PFLI…GFLA), 226 to 246 (LLKI…MVLP), 249 to 269 (AVVE…ILTL), 281 to 301 (LMMT…FKII), and 318 to 338 (MITT…AIGF).

The protein belongs to the UPF0658 family.

The protein resides in the golgi apparatus membrane. This chain is UPF0658 Golgi apparatus membrane protein C23H3.04, found in Schizosaccharomyces pombe (strain 972 / ATCC 24843) (Fission yeast).